The sequence spans 315 residues: Ribosomal RNA small subunit methyltransferase H (315 aa).

Residues 33-35, Asp52, Phe84, Asp106, and Gln113 contribute to the S-adenosyl-L-methionine site; that span reads GGH. The interval 290 to 315 is disordered; that stretch reads PITASTSELENNNRSHSAKLRVAEKL. Residues 292–304 are compositionally biased toward polar residues; that stretch reads TASTSELENNNRS.

It belongs to the methyltransferase superfamily. RsmH family.

It is found in the cytoplasm. The enzyme catalyses cytidine(1402) in 16S rRNA + S-adenosyl-L-methionine = N(4)-methylcytidine(1402) in 16S rRNA + S-adenosyl-L-homocysteine + H(+). Functionally, specifically methylates the N4 position of cytidine in position 1402 (C1402) of 16S rRNA. The chain is Ribosomal RNA small subunit methyltransferase H from Lactobacillus helveticus (strain DPC 4571).